The following is a 265-amino-acid chain: Hydroxyethylthiazole kinase (265 aa).

A substrate-binding site is contributed by Met50. Arg125 and Thr171 together coordinate ATP. Residue Gly198 coordinates substrate.

Belongs to the Thz kinase family. Requires Mg(2+) as cofactor.

The catalysed reaction is 5-(2-hydroxyethyl)-4-methylthiazole + ATP = 4-methyl-5-(2-phosphooxyethyl)-thiazole + ADP + H(+). It functions in the pathway cofactor biosynthesis; thiamine diphosphate biosynthesis; 4-methyl-5-(2-phosphoethyl)-thiazole from 5-(2-hydroxyethyl)-4-methylthiazole: step 1/1. Its function is as follows. Catalyzes the phosphorylation of the hydroxyl group of 4-methyl-5-beta-hydroxyethylthiazole (THZ). The protein is Hydroxyethylthiazole kinase of Salmonella newport (strain SL254).